Here is a 397-residue protein sequence, read N- to C-terminus: Putative nickel insertion protein (397 aa).

This sequence belongs to the LarC family.

This chain is Putative nickel insertion protein, found in Synechococcus sp. (strain JA-2-3B'a(2-13)) (Cyanobacteria bacterium Yellowstone B-Prime).